Here is a 325-residue protein sequence, read N- to C-terminus: Zinc metalloproteinase/disintegrin (325 aa).

Residues 1-39 constitute a propeptide that is removed on maturation; that stretch reads KYENVEKGDEAPKKCGVTHTNLESDEPIEKASQLFGTSE. The residue at position 40 (Gln-40) is a Pyrrolidone carboxylic acid. The Peptidase M12B domain maps to 46-242; the sequence is RHIELVIVAD…HNPQRILNEP (197 aa). A Zn(2+)-binding site is contributed by His-182. Glu-183 is an active-site residue. Zn(2+) is bound by residues His-186 and His-192. 2 cysteine pairs are disulfide-bonded: Cys-197–Cys-221 and Cys-199–Cys-204. A propeptide spanning residues 243-257 is cleaved from the precursor; sequence LRTDTVSTPVYGNVL. In terms of domain architecture, Disintegrin spans 250–322; the sequence is TPVYGNVLQN…SECESNPWNF (73 aa). At Gln-258 the chain carries Pyrrolidone carboxylic acid. Disulfide bonds link Cys-264-Cys-287, Cys-278-Cys-284, Cys-283-Cys-308, and Cys-296-Cys-315. The Cell attachment site signature appears at 300-302; the sequence is RGD.

It belongs to the venom metalloproteinase (M12B) family. P-II subfamily. P-IIe sub-subfamily. In terms of assembly, heterodimer of bitisgabonin and gabonin-1 (bitisgabonin-1) or gabonin-2 (bitisgabonin-2); disulfide-linked. It depends on Zn(2+) as a cofactor. In terms of tissue distribution, expressed by the venom gland.

It is found in the secreted. Functionally, impairs hemostasis in the envenomed animal. Its function is as follows. In dimer with gabonin-1 (bitisgabonin-1), is a potent inhibitor of the adhesion of the RGD-dependent integrin alpha-5/beta-1 (ITGA5/ITGB1) to immobilized fibronectin. In dimer with gabonin-2 (bitisgabonin-2), preferentially inhibits the adhesion of the alpha-4/beta-1 (ITGA4/ITGB1) and alpha-9/beta-1 (ITGA9/ITGB1) integrins to VCAM-1 and also acts as a strong antagonist of alpha-5/beta-1 (ITGA5/ITGB1). The polypeptide is Zinc metalloproteinase/disintegrin (Bitis gabonica (Gaboon adder)).